The chain runs to 191 residues: GDP-mannose pyrophosphatase (191 aa).

GDP-alpha-D-mannose is bound by residues tyrosine 17, 38-40, arginine 67, and 85-87; these read KRE and AGL. The Nudix hydrolase domain occupies 43–180; sequence DRGNGATILL…EIRDGKTVLL (138 aa). Residues alanine 85, glutamate 100, and glutamate 104 each contribute to the Mg(2+) site. A Nudix box motif is present at residues 86–106; sequence GLLDNDEPEVCIRKEAIEETG. GDP-alpha-D-mannose is bound by residues glutamate 104, glutamate 127, 150-151, and lysine 176; that span reads DE. Residue glutamate 151 participates in Mg(2+) binding.

Belongs to the Nudix hydrolase family. NudK subfamily. Homodimer. The cofactor is Mg(2+).

It carries out the reaction GDP-alpha-D-mannose + H2O = alpha-D-mannose 1-phosphate + GMP + 2 H(+). Its function is as follows. Nucleoside diphosphate sugar hydrolase that hydrolyzes GDP-mannose as its preferred substrate, yielding GMP and mannose-1-phosphate. This chain is GDP-mannose pyrophosphatase (nudK), found in Escherichia coli (strain K12 / DH10B).